Consider the following 184-residue polypeptide: Photosystem I assembly protein Ycf4 (184 aa).

A run of 2 helical transmembrane segments spans residues 22–42 (FCWAFILFFGSLGFLLVGTSS) and 57–77 (IVFFPQGIVMSFYGIAGLFIS).

Belongs to the Ycf4 family.

It is found in the plastid. The protein resides in the chloroplast thylakoid membrane. Seems to be required for the assembly of the photosystem I complex. This is Photosystem I assembly protein Ycf4 from Gossypium barbadense (Sea Island cotton).